Reading from the N-terminus, the 293-residue chain is Energy-coupling factor transporter ATP-binding protein EcfA2 (293 aa).

The 244-residue stretch at 3–246 (ITFQKVEHRY…ADELEKIGVD (244 aa)) folds into the ABC transporter domain. 40–47 (GHTGSGKS) contributes to the ATP binding site.

Belongs to the ABC transporter superfamily. Energy-coupling factor EcfA family. In terms of assembly, forms a stable energy-coupling factor (ECF) transporter complex composed of 2 membrane-embedded substrate-binding proteins (S component), 2 ATP-binding proteins (A component) and 2 transmembrane proteins (T component).

It is found in the cell membrane. Its function is as follows. ATP-binding (A) component of a common energy-coupling factor (ECF) ABC-transporter complex. Unlike classic ABC transporters this ECF transporter provides the energy necessary to transport a number of different substrates. The sequence is that of Energy-coupling factor transporter ATP-binding protein EcfA2 from Bacillus cereus (strain ATCC 10987 / NRS 248).